The following is a 1192-amino-acid chain: Leucine-rich repeat receptor protein kinase EMS1 (1192 aa).

The N-terminal stretch at Met1–Ser18 is a signal peptide. Asn47 is a glycosylation site (N-linked (GlcNAc...) asparagine). LRR repeat units follow at residues Leu64 to Ser87, Asn90 to Leu112, His114 to Pro137, Gln138 to Ser160, Ala163 to Leu185, Asn187 to Ile209, His235 to Leu257, Asn259 to Cys281, Ser283 to Glu304, Val330 to Cys352, Met354 to Ser376, Ser378 to Cys400, Ser402 to Pro425, Leu426 to Ser447, Asn449 to Ala471, Ser473 to Thr496, Ser497 to Thr520, Ser521 to Leu543, Gln545 to Tyr567, His581 to Cys603, Val605 to Thr628, Asn629 to Ser651, Lys653 to Leu675, Ser677 to Gly697, Glu701 to Met723, Lys725 to Thr748, Gln749 to Pro772, and Asn773 to Gln795. Residues Asn171, Asn187, and Asn208 are each glycosylated (N-linked (GlcNAc...) asparagine). Residue Asn259 is glycosylated (N-linked (GlcNAc...) asparagine). N-linked (GlcNAc...) asparagine glycans are attached at residues Asn414 and Asn435. Residue Asn555 is glycosylated (N-linked (GlcNAc...) asparagine). Residue Asn629 is glycosylated (N-linked (GlcNAc...) asparagine). N-linked (GlcNAc...) asparagine glycosylation is found at Asn682, Asn711, and Asn746. A helical transmembrane segment spans residues Trp828 to Leu848. Thr914 is subject to Phosphothreonine. The 276-residue stretch at Phe917–Ile1192 folds into the Protein kinase domain. ATP contacts are provided by residues Ile923–Val931 and Lys945. Tyr990 bears the Phosphotyrosine mark. Asp1043 acts as the Proton acceptor in catalysis. Position 1085 is a phosphotyrosine (Tyr1085).

This sequence belongs to the protein kinase superfamily. Ser/Thr protein kinase family. In terms of assembly, interacts with TPD1. Post-translationally, autophosphorylates in vitro. Present in young buds, open flowers and siliques but absent from mature leaves and roots. Strongly expressed in the young organ primordia, and as the anthers and ovules developed, became focused in the microsporangia and in the distal and chalazal regions of the ovule. In cv. Landsberg erecta, only expressed in the anthers of young floral buds.

The protein resides in the cell membrane. It carries out the reaction L-seryl-[protein] + ATP = O-phospho-L-seryl-[protein] + ADP + H(+). It catalyses the reaction L-threonyl-[protein] + ATP = O-phospho-L-threonyl-[protein] + ADP + H(+). In terms of biological role, receptor with a serine/threonine-protein kinase activity required for the specification of the correct number of male archesporial initials and for the subsequent specification of tapetal and middle cell layer identities. In seeds, required for enhancing cell size and the rate of embryonic development. The sequence is that of Leucine-rich repeat receptor protein kinase EMS1 from Arabidopsis thaliana (Mouse-ear cress).